The chain runs to 260 residues: Hemin import ATP-binding protein HmuV (260 aa).

An ABC transporter domain is found at 7–243; that stretch reads IQASNISVTF…ERIEQVYGYS (237 aa). 39 to 46 lines the ATP pocket; that stretch reads GPNGAGKS.

The protein belongs to the ABC transporter superfamily. Heme (hemin) importer (TC 3.A.1.14.5) family. As to quaternary structure, the complex is composed of two ATP-binding proteins (HmuV), two transmembrane proteins (HmuU) and a solute-binding protein (HmuT).

It is found in the cell inner membrane. Part of the ABC transporter complex HmuTUV involved in hemin import. Responsible for energy coupling to the transport system. The polypeptide is Hemin import ATP-binding protein HmuV (Vibrio anguillarum (strain ATCC 68554 / 775) (Listonella anguillarum)).